A 469-amino-acid chain; its full sequence is Interstitial collagenase (469 aa).

A signal peptide spans 1–19 (MFSLLLLLLLLCNTGSHGF). Positions 20–99 (PAATSETQEQ…PRCGVPDVAE (80 aa)) are cleaved as a propeptide — activation peptide. Ser-57 bears the Phosphoserine mark. A Cysteine switch motif is present at residues 90–97 (PRCGVPDV). Cys-92 lines the Zn(2+) pocket. Asn-120 is a glycosylation site (N-linked (GlcNAc...) asparagine). Residues Asp-124 and Asp-158 each coordinate Ca(2+). Positions 168 and 170 each coordinate Zn(2+). Ca(2+)-binding residues include Asp-175, Gly-176, Gly-178, and Asn-180. His-183 contacts Zn(2+). The Ca(2+) site is built by Gly-190, Gly-192, and Asp-194. Residue His-196 participates in Zn(2+) binding. Residues Asp-198, Glu-199, and Glu-201 each contribute to the Ca(2+) site. His-218 contacts Zn(2+). The active site involves Glu-219. Zn(2+) contacts are provided by His-222 and His-228. Residue Thr-274 is modified to Phosphothreonine. Hemopexin repeat units follow at residues 275–324 (PQVC…WPQV), 325–371 (PNGL…FGFP), 374–422 (VKNI…FPGI), and 423–466 (GNKV…WFNC). Cys-278 and Cys-466 are disulfide-bonded. Residues Asp-285 and Gln-329 each coordinate Ca(2+). Tyr-360 carries the phosphotyrosine; by PKDCC modification. Ca(2+)-binding residues include Asp-378 and Asp-427.

It belongs to the peptidase M10A family. Ca(2+) serves as cofactor. Zn(2+) is required as a cofactor. Undergoes autolytic cleavage to produce a N-terminal fragment having reduced collagenolytic activity. In terms of processing, tyrosine phosphorylated in platelets by PKDCC/VLK.

The protein localises to the secreted. The protein resides in the extracellular space. Its subcellular location is the extracellular matrix. It carries out the reaction Cleavage of the triple helix of collagen at about three-quarters of the length of the molecule from the N-terminus, at 775-Gly-|-Ile-776 in the alpha1(I) chain. Cleaves synthetic substrates and alpha-macroglobulins at bonds where P1' is a hydrophobic residue.. Can be activated without removal of the activation peptide. Its function is as follows. Cleaves collagens of types I, II, and III at one site in the helical domain. Also cleaves collagens of types VII and X. This chain is Interstitial collagenase (MMP1), found in Sus scrofa (Pig).